The following is a 329-amino-acid chain: GTPase Obg (329 aa).

The 159-residue stretch at 1-159 (MQFIDYAEIE…RWLRLELKLL (159 aa)) folds into the Obg domain. In terms of domain architecture, OBG-type G spans 160 to 328 (AEVGIIGLPN…LLQIVWQLLD (169 aa)). Residues 166 to 173 (GLPNAGKS), 191 to 195 (FTTLV), 213 to 216 (DIPG), 280 to 283 (NKMD), and 309 to 311 (SGV) contribute to the GTP site. Residues S173 and T193 each coordinate Mg(2+).

This sequence belongs to the TRAFAC class OBG-HflX-like GTPase superfamily. OBG GTPase family. In terms of assembly, monomer. Requires Mg(2+) as cofactor.

It is found in the cytoplasm. An essential GTPase which binds GTP, GDP and possibly (p)ppGpp with moderate affinity, with high nucleotide exchange rates and a fairly low GTP hydrolysis rate. Plays a role in control of the cell cycle, stress response, ribosome biogenesis and in those bacteria that undergo differentiation, in morphogenesis control. This Rippkaea orientalis (strain PCC 8801 / RF-1) (Cyanothece sp. (strain PCC 8801)) protein is GTPase Obg.